The primary structure comprises 513 residues: MADKLMDKNFEELCYSCRTGDMDNVDRLISTGVNVNSVDKFDNSPLFLASLCGHEAVVKLLLQRGAVCDRDRYEGARCIYGALTDTIRDTLLSYDISKAVDVKQPFATHISSMYNDEGFLKRDITFRVSNGKLFTAHKFLLCARSEILAEKMVNEWAKHEIVSLEVRPDIFDIFLKFLYLIPILHQIEPGQYEELIELSSKFDIELLPEFLDKARHTADPTEKSRLMSDYQYKFTEVARSQLLIFVNNCIFRSTVDLANSERRVFSLMNCPAYPDVQLMVKNRNGAIRIYPCHLAVLSRAEYFKVMFTNNFKEKVTYIKAKHVTGKYNSIIPQLTLPNCEFEVAEIILRYLYADNTDIPWMYAVDVLLLADILLEDRLKTIASTIITQSKEFIQQYNVFDVLYLSWEIGVERLEQFAAKFIAIHLQELYKDPEIKRAIMLSSQRISLRQETDTIELVDDIRYYLLRKYSFEPDDVELFENQDDLEYLKQVGYLEYRKDMGMLDNILADLELDV.

ANK repeat units lie at residues 8-37 and 41-70; these read KNFEELCYSCRTGDMDNVDRLISTGVNVNS and FDNSPLFLASLCGHEAVVKLLLQRGAVCDR. BTB domains follow at residues 122-179 and 274-360; these read RDIT…KFLY and PDVQ…DIPW.

The sequence is that of Ankyrin repeat-containing protein YIL001W from Saccharomyces cerevisiae (strain ATCC 204508 / S288c) (Baker's yeast).